Consider the following 726-residue polypeptide: Catalase-peroxidase (726 aa).

Positions 1–33 are disordered; sequence MSTTDDTHNTLSTGKCPFHQGGHDRSAGAGTAS. Residues 105 to 226 constitute a cross-link (tryptophyl-tyrosyl-methioninium (Trp-Tyr) (with M-252)); sequence WHGAGTYRSI…LGATEMGLIY (122 aa). Histidine 106 (proton acceptor) is an active-site residue. Positions 226-252 form a cross-link, tryptophyl-tyrosyl-methioninium (Tyr-Met) (with W-105); sequence YVNPEGPDHSGEPLSAAAAIRATFGNM. Histidine 267 is a heme b binding site.

It belongs to the peroxidase family. Peroxidase/catalase subfamily. As to quaternary structure, homodimer or homotetramer. The cofactor is heme b. Formation of the three residue Trp-Tyr-Met cross-link is important for the catalase, but not the peroxidase activity of the enzyme.

It carries out the reaction H2O2 + AH2 = A + 2 H2O. It catalyses the reaction 2 H2O2 = O2 + 2 H2O. Its function is as follows. Bifunctional enzyme with both catalase and broad-spectrum peroxidase activity. The protein is Catalase-peroxidase of Salmonella choleraesuis (strain SC-B67).